The sequence spans 283 residues: 5'-nucleotidase SurE (283 aa).

The a divalent metal cation site is built by aspartate 14, aspartate 15, serine 47, and asparagine 105.

It belongs to the SurE nucleotidase family. Requires a divalent metal cation as cofactor.

The protein resides in the cytoplasm. It carries out the reaction a ribonucleoside 5'-phosphate + H2O = a ribonucleoside + phosphate. Its function is as follows. Nucleotidase that shows phosphatase activity on nucleoside 5'-monophosphates. This chain is 5'-nucleotidase SurE, found in Chlamydia muridarum (strain MoPn / Nigg).